Reading from the N-terminus, the 507-residue chain is Maturase K (507 aa).

It belongs to the intron maturase 2 family. MatK subfamily.

The protein localises to the plastid. It localises to the chloroplast. Usually encoded in the trnK tRNA gene intron. Probably assists in splicing its own and other chloroplast group II introns. The protein is Maturase K of Liriodendron chinense (Chinese tulip tree).